Consider the following 246-residue polypeptide: Ribonuclease PH (246 aa).

A disordered region spans residues 1–33 (MTPPKLPVREGRDALTPRPVSVQRGVNPHAPGS). Residues arginine 90 and 128 to 130 (GTR) each bind phosphate.

This sequence belongs to the RNase PH family. As to quaternary structure, homohexameric ring arranged as a trimer of dimers.

It catalyses the reaction tRNA(n+1) + phosphate = tRNA(n) + a ribonucleoside 5'-diphosphate. Functionally, phosphorolytic 3'-5' exoribonuclease that plays an important role in tRNA 3'-end maturation. Removes nucleotide residues following the 3'-CCA terminus of tRNAs; can also add nucleotides to the ends of RNA molecules by using nucleoside diphosphates as substrates, but this may not be physiologically important. Probably plays a role in initiation of 16S rRNA degradation (leading to ribosome degradation) during starvation. The protein is Ribonuclease PH of Deinococcus radiodurans (strain ATCC 13939 / DSM 20539 / JCM 16871 / CCUG 27074 / LMG 4051 / NBRC 15346 / NCIMB 9279 / VKM B-1422 / R1).